The primary structure comprises 136 residues: MPTIQQLVRKGRETLVEKGKSPALDACPQRRGVCVRVYTTTPKKPNSAMRKVARVRLTNGKEVNSYIPGEGHNLQEHSIVLVRGGRVKDLPGVRYHIVRGTLDTAGVNGRTQRRSKYGAKRPKPGQAAAAAKGKKK.

Asp89 carries the 3-methylthioaspartic acid modification. A disordered region spans residues 104–136 (TAGVNGRTQRRSKYGAKRPKPGQAAAAAKGKKK). Residues 111 to 123 (TQRRSKYGAKRPK) are compositionally biased toward basic residues. Over residues 124–136 (PGQAAAAAKGKKK) the composition is skewed to low complexity.

This sequence belongs to the universal ribosomal protein uS12 family. In terms of assembly, part of the 30S ribosomal subunit. Contacts proteins S8 and S17. May interact with IF1 in the 30S initiation complex.

Its function is as follows. With S4 and S5 plays an important role in translational accuracy. In terms of biological role, interacts with and stabilizes bases of the 16S rRNA that are involved in tRNA selection in the A site and with the mRNA backbone. Located at the interface of the 30S and 50S subunits, it traverses the body of the 30S subunit contacting proteins on the other side and probably holding the rRNA structure together. The combined cluster of proteins S8, S12 and S17 appears to hold together the shoulder and platform of the 30S subunit. The polypeptide is Small ribosomal subunit protein uS12 (Parabacteroides distasonis (strain ATCC 8503 / DSM 20701 / CIP 104284 / JCM 5825 / NCTC 11152)).